Reading from the N-terminus, the 723-residue chain is MNTLKLCLILYACLVLLPVRVMSADLSPASSERQPIYIEADHIDGHYQQEIEAIGNVRMRRGDQTLTADRVKYYQSNENVEVEGNAQLERPDDILWGSYLQMNLNDNTGQLSEPRYLQKDGNGRGDGNLLLLEGENQYRFKKARYTTCPEDDHDWYILADDLEIDKEKKVGTARHASVRFKDVPILYVPWMNFSFGNERKTGFLSPIMGNTSRSGVEVSVPFYWNIAPNYDATITPRLMSRRGVMLNNEFRYIGQTLNGRFLLDYLPNDLETDTTRYGMQLNHFHNLGAGWFGMINYNSASDRNYFRDLGNNILFTSQTNLLQQGFASYFRELGRNGTLTFSTLLQQFQTLQDPRAPIISPFKILPRFTLNAAKRNVYGLDFDFSGSFTHFSHSTLPHGLRTTFLPGVSLPLENSFGFIRPRVSLHHTRYDLNEPANPAANDKHLSRTVPIFSFDSGIVLERDTTLARENFVQTIEPRVFYTYIPYRDQQLLPNFDSAEMDFSYPQLFLERRFSGEDRINDANEITLAVSSRLIHSATGNERLRFSAGQRIRFSDRRVILTSPQVTRAGSDFIAELSGGITQNIKTDTGIQLNQNNFLIEKIRTGISYRPAPGKVINAGYRFTRDVLEQVDLSTQWPFLKKWQGFAAINYSLKDDKLLAGLLGLEYNACCWSLRFVTSHFTTATQRTSTNIFVQLELNDLMRIGTNPVRVLQQTIPGYMRTDL.

The signal sequence occupies residues 1 to 23 (MNTLKLCLILYACLVLLPVRVMS).

This sequence belongs to the LptD family. In terms of assembly, component of the lipopolysaccharide transport and assembly complex. Interacts with LptE and LptA.

It localises to the cell outer membrane. In terms of biological role, together with LptE, is involved in the assembly of lipopolysaccharide (LPS) at the surface of the outer membrane. The chain is LPS-assembly protein LptD from Nitrosomonas europaea (strain ATCC 19718 / CIP 103999 / KCTC 2705 / NBRC 14298).